The chain runs to 181 residues: UPF0302 protein ABC1905 (181 aa).

The protein belongs to the UPF0302 family.

The polypeptide is UPF0302 protein ABC1905 (Shouchella clausii (strain KSM-K16) (Alkalihalobacillus clausii)).